A 799-amino-acid chain; its full sequence is Oligopeptide transporter 1 (799 aa).

Disordered regions lie at residues 1-26 and 43-64; these read MSTI…PIQI and DVNN…QKFD. The Extracellular portion of the chain corresponds to 1 to 108; the sequence is MSTIYRESDS…DPTIRLNHWR (108 aa). Over residues 13 to 26 the composition is skewed to low complexity; the sequence is SEPSPTPTTIPIQI. N-linked (GlcNAc...) asparagine glycosylation is present at Asn46. Thr48, Thr50, and Thr51 each carry phosphothreonine. Residues 109-129 traverse the membrane as a helical segment; the sequence is TWFLTTVFVVVFAGVNQFFSL. Over 130–135 the chain is Cytoplasmic; that stretch reads RYPSLE. Residues 136-156 traverse the membrane as a helical segment; it reads INFLVAQVVCYPIGRILALLP. Residues 157-177 lie on the Extracellular side of the membrane; the sequence is DWKCSKVPFFDLNPGPFTKKE. Residues 178 to 198 form a helical membrane-spanning segment; that stretch reads HAVVTIAVALTSSTAYAMYIL. Residues 199-210 are Cytoplasmic-facing; it reads NAQGSFYNMKLN. Residues 211 to 231 traverse the membrane as a helical segment; the sequence is VGYQFLLVWTSQMIGYGAAGL. Residues 232-276 are Extracellular-facing; the sequence is TRRWVVNPASSIWPQTLISVSLFDSLHSRKVEKTVANGWTMPRYR. Residues 277–297 form a helical membrane-spanning segment; it reads FFLIVLIGSFIWYWVPGFLFT. The Cytoplasmic segment spans residues 298 to 313; that stretch reads GLSYFNVILWGSKTRH. The helical transmembrane segment at 314 to 334 threads the bilayer; that stretch reads NFIANTIFGTQSGLGALPITF. The Extracellular portion of the chain corresponds to 335–359; it reads DYTQVSQAMSGSVFATPFYVSANTY. The chain crosses the membrane as a helical span at residues 360–380; the sequence is ASVLIFFVIVLPCLYFTNTWY. Residues 381–428 are Cytoplasmic-facing; sequence AKYMPVISGSTYDNTQNKYNVTKILNEDYSINLEKYKEYSPVFVPFSY. Residues 429 to 449 traverse the membrane as a helical segment; sequence LLSYALNFAAVIAVFVHCILY. At 450 to 482 the chain is on the extracellular side; that stretch reads HGKDIVAKFKDRKNGGTDIHMRIYSKNYKDCPD. The helical transmembrane segment at 483–503 threads the bilayer; that stretch reads WWYLLLQIVMIGLGFVAVCCF. Residues 504-508 are Cytoplasmic-facing; it reads DTKFP. A helical membrane pass occupies residues 509-529; that stretch reads AWAFVIAILISLVNFIPQGIL. At 530–540 the chain is on the extracellular side; that stretch reads EAMTNQHVGLN. The helical transmembrane segment at 541–561 threads the bilayer; sequence IITELICGYMLPLRPMANLLF. Residues 562–590 are Cytoplasmic-facing; sequence KLYGFIVMRQGLNLSRDLKLAMYMKVSPR. Residues 591–611 form a helical membrane-spanning segment; the sequence is LIFAVQIYATIISGMVNVGVQ. Over 612 to 659 the chain is Extracellular; sequence EWMMHNIDGLCTTDQPNGFTCANGRTVFNASIIWSLPKYLFSSGRIYN. Residue Asn640 is glycosylated (N-linked (GlcNAc...) asparagine). Residues 660-680 form a helical membrane-spanning segment; that stretch reads PLMWFFLIGLLFPLAVYAVQW. Residues 681-736 lie on the Cytoplasmic side of the membrane; that stretch reads KFPKFKFAKHIHTPVFFTGPGNIPPSTPYNYSLFFAMSFCLNLIRKRWRAWFNKYN. A helical transmembrane segment spans residues 737–757; that stretch reads FVMGAGVEAGVAISVVIIFLC. Residues 758-799 lie on the Extracellular side of the membrane; that stretch reads VQYPGGKLSWWGNNVWKRTYDNDYKKFYTLKKGETFGYDKWW.

Belongs to the oligopeptide OPT transporter family.

Its subcellular location is the cell membrane. Functionally, high affinity transporter for glutathione. Also transports tetra- and pentapeptides like the opioids leucine enkephalin (Tyr-Gly-Gly-Phe-Leu) and methionine enkephalin (Tyr-Gly-Gly_Phe-Met) across the cell membrane. In Saccharomyces cerevisiae (strain ATCC 204508 / S288c) (Baker's yeast), this protein is Oligopeptide transporter 1 (OPT1).